The chain runs to 217 residues: Probable transaldolase (217 aa).

Lys-85 acts as the Schiff-base intermediate with substrate in catalysis.

It belongs to the transaldolase family. Type 3B subfamily.

Its subcellular location is the cytoplasm. The catalysed reaction is D-sedoheptulose 7-phosphate + D-glyceraldehyde 3-phosphate = D-erythrose 4-phosphate + beta-D-fructose 6-phosphate. The protein operates within carbohydrate degradation; pentose phosphate pathway; D-glyceraldehyde 3-phosphate and beta-D-fructose 6-phosphate from D-ribose 5-phosphate and D-xylulose 5-phosphate (non-oxidative stage): step 2/3. Functionally, transaldolase is important for the balance of metabolites in the pentose-phosphate pathway. The chain is Probable transaldolase from Agathobacter rectalis (strain ATCC 33656 / DSM 3377 / JCM 17463 / KCTC 5835 / VPI 0990) (Eubacterium rectale).